The following is a 196-amino-acid chain: UPF0215 protein MA_4269 (196 aa).

It belongs to the UPF0215 family.

The chain is UPF0215 protein MA_4269 from Methanosarcina acetivorans (strain ATCC 35395 / DSM 2834 / JCM 12185 / C2A).